The primary structure comprises 360 residues: Protein Wnt-2 (360 aa).

The first 25 residues, 1–25 (MNAPLGGIWLWLPLLLTWLTPEVSS), serve as a signal peptide directing secretion. Disulfide bonds link C76–C87, C127–C135, C137–C157, C206–C220, C208–C215, C278–C309, C294–C304, C308–C348, C324–C339, C326–C336, and C331–C332. Residue S212 is the site of O-palmitoleoyl serine; by PORCN attachment. N295 carries an N-linked (GlcNAc...) asparagine glycan.

Belongs to the Wnt family. In terms of processing, palmitoleoylation is required for efficient binding to frizzled receptors. Depalmitoleoylation leads to Wnt signaling pathway inhibition.

The protein localises to the secreted. The protein resides in the extracellular space. Its subcellular location is the extracellular matrix. Functionally, ligand for members of the frizzled family of seven transmembrane receptors. Functions in the canonical Wnt signaling pathway that results in activation of transcription factors of the TCF/LEF family. Functions as a upstream regulator of FGF10 expression. Plays an important role in embryonic lung development. May contribute to embryonic brain development by regulating the proliferation of dopaminergic precursors and neurons. In Equus caballus (Horse), this protein is Protein Wnt-2 (WNT2).